The chain runs to 300 residues: Ribonuclease HIII (300 aa).

Positions 86-300 (RSRIGVDESG…FNEVLGSGNQ (215 aa)) constitute an RNase H type-2 domain. Residues D92, E93, and D196 each coordinate a divalent metal cation.

This sequence belongs to the RNase HII family. RnhC subfamily. Mn(2+) is required as a cofactor. The cofactor is Mg(2+).

It is found in the cytoplasm. It carries out the reaction Endonucleolytic cleavage to 5'-phosphomonoester.. Its function is as follows. Endonuclease that specifically degrades the RNA of RNA-DNA hybrids. The chain is Ribonuclease HIII from Chlamydia trachomatis serovar A (strain ATCC VR-571B / DSM 19440 / HAR-13).